The chain runs to 34 residues: Photosystem II reaction center protein Psb30 (34 aa).

Residues 6-26 form a helical membrane-spanning segment; the sequence is IVAQLLSLALVTLSGPAVIFL.

The protein belongs to the Psb30/Ycf12 family. As to quaternary structure, PSII is composed of 1 copy each of membrane proteins PsbA, PsbB, PsbC, PsbD, PsbE, PsbF, PsbH, PsbI, PsbJ, PsbK, PsbL, PsbM, PsbT, PsbX, PsbY, PsbZ, Psb30/Ycf12, peripheral proteins of the oxygen-evolving complex and a large number of cofactors. It forms dimeric complexes.

The protein localises to the plastid. Its subcellular location is the chloroplast thylakoid membrane. A core subunit of photosystem II (PSII), probably helps stabilize the reaction center. In Emiliania huxleyi (Coccolithophore), this protein is Photosystem II reaction center protein Psb30.